The chain runs to 94 residues: DNA-binding protein HU (94 aa).

The interval 56–94 is disordered; that stretch reads QKGKEGKVPGSDKTYKTEDKRVPKFKPGKTLKQKVEEGK. Residues 68–77 show a composition bias toward basic and acidic residues; sequence KTYKTEDKRV. Residues 78 to 87 show a composition bias toward basic residues; the sequence is PKFKPGKTLK.

The protein belongs to the bacterial histone-like protein family. In terms of assembly, homodimer.

Its function is as follows. Histone-like DNA-binding protein which is capable of wrapping DNA to stabilize it, and thus to prevent its denaturation under extreme environmental conditions. This is DNA-binding protein HU (hup) from Helicobacter pylori (strain ATCC 700392 / 26695) (Campylobacter pylori).